The primary structure comprises 448 residues: tRNA-2-methylthio-N(6)-dimethylallyladenosine synthase (448 aa).

The MTTase N-terminal domain occupies Lys-3–Gly-120. [4Fe-4S] cluster-binding residues include Cys-12, Cys-49, Cys-83, Cys-158, Cys-162, and Cys-165. The Radical SAM core domain occupies Thr-144–Gln-376. One can recognise a TRAM domain in the interval Arg-379 to Ser-444.

This sequence belongs to the methylthiotransferase family. MiaB subfamily. As to quaternary structure, monomer. It depends on [4Fe-4S] cluster as a cofactor.

The protein localises to the cytoplasm. The enzyme catalyses N(6)-dimethylallyladenosine(37) in tRNA + (sulfur carrier)-SH + AH2 + 2 S-adenosyl-L-methionine = 2-methylsulfanyl-N(6)-dimethylallyladenosine(37) in tRNA + (sulfur carrier)-H + 5'-deoxyadenosine + L-methionine + A + S-adenosyl-L-homocysteine + 2 H(+). Functionally, catalyzes the methylthiolation of N6-(dimethylallyl)adenosine (i(6)A), leading to the formation of 2-methylthio-N6-(dimethylallyl)adenosine (ms(2)i(6)A) at position 37 in tRNAs that read codons beginning with uridine. This chain is tRNA-2-methylthio-N(6)-dimethylallyladenosine synthase, found in Chromohalobacter salexigens (strain ATCC BAA-138 / DSM 3043 / CIP 106854 / NCIMB 13768 / 1H11).